The following is a 196-amino-acid chain: Transmembrane protein 52 (196 aa).

The first 28 residues, 1-28, serve as a signal peptide directing secretion; sequence MAPGPSATQGILLLLPLLPLSQVTLGSA. A helical membrane pass occupies residues 47–67; that stretch reads LWHVGLILLAILLMLLCGVTA. The tract at residues 162–196 is disordered; the sequence is EEVAAPSEKTNSLPEALEPETTGGPQEPGPSAQRP.

The protein resides in the membrane. The chain is Transmembrane protein 52 (Tmem52) from Mus musculus (Mouse).